The chain runs to 207 residues: 5-nitrosalicylic acid 1,2-dioxygenase (207 aa).

Residues 85 to 151 (QLIHPGEEVT…GDKDTLMYVI (67 aa)) enclose the Cupin type-2 domain.

The enzyme catalyses 5-nitrosalicylate + O2 = 2-oxo-3-(5-oxofuran-2-ylidene)propanoate + nitrite + H(+). Functionally, dioxygenase that catalyzes the cleavage of the aromatic ring of 5-nitrosalicylate (5NSA) without prior removal of the nitro group in biodegradation of 5-nitroanthranilate. The protein is 5-nitrosalicylic acid 1,2-dioxygenase (naaB) of Bradyrhizobium sp.